The chain runs to 769 residues: MRCRSVALVWREWKWRGVGDKRQSRLIFLNLPSTLNPDTFRKTLLSPATLKSTTITDTKLVPKRRFAFVGYKDAEEAQKVKEWFDGTYAFGGGKVKVDFVKDEPLKTGDKLNRGEKSKEKRSKEGRDNVQEKQEPNKRLQEFMSVMKGVDPAMASPEASTSTAEGTKKEKSVKGKEKSEEPEEAEADDDDAAWLRRRQAALEGEPSTPQLSADEQLILSTSRLFVRNLAFITTSESLSSHFSTYGRIDECHLPVSQTTGEPLGTAFLQFHNAEDALAAYKALDKTIFQGRLLHVLPGRAKPGQEGAAAGSGVVDGKVLGKRDEGRGEVKSKVDAKRKQESAKGVNWASLYMNSDAVAASVADRMGISKSELLNADSGNSAVKLALAETTVIEETKKYFEEAGIVLESLQPRVPRSQTTILVKNIPYGTSIQSLTDLFAPHGKLTRVLLPPAGTLGVVEFENHMDAGRAFKALAYRRLGNAVLYLEKGPVGMFKSETAPGVGPISTEQKREEEAKALAEKVESLPEQPDPTDEAGSTLFLKGLNFTTTTPHLQTVLSHIPGFSFARVQMKPDPKRPGEKLSMGYGFVGFKTKEAATKALKALEGFEIDGKSLEVKFAQRGAEDDRETKKGGDAEGGKTKSTKVLVKNLPFEATKKDVRELFSAYGQLKSLRLPRKAVPTSTGAQSTRGFAFLEFTTHTEAARAMEALKHTHLLGRHLVLQWANEGEEVDIKGLREKVKGEVRGMEDGGDRKRRKLDFKGGKEDEMDGLEV.

Residues 24–102 (SRLIFLNLPS…GKVKVDFVKD (79 aa)) enclose the RRM 1 domain. Disordered stretches follow at residues 105-139 (LKTGDKLNRGEKSKEKRSKEGRDNVQEKQEPNKRL) and 151-191 (PAMA…DDDA). A compositionally biased stretch (basic and acidic residues) spans 165 to 178 (GTKKEKSVKGKEKS). Residues 179–191 (EEPEEAEADDDDA) show a composition bias toward acidic residues. RRM domains are found at residues 221–299 (SRLF…PGRA), 417–489 (TTIL…KGPV), and 535–618 (STLF…FAQR). The segment at 617 to 637 (QRGAEDDRETKKGGDAEGGKT) is disordered. The span at 619–636 (GAEDDRETKKGGDAEGGK) shows a compositional bias: basic and acidic residues. Residues 640–723 (TKVLVKNLPF…RHLVLQWANE (84 aa)) form the RRM 5 domain. The disordered stretch occupies residues 740–769 (VRGMEDGGDRKRRKLDFKGGKEDEMDGLEV).

It belongs to the RRM MRD1 family.

The protein localises to the nucleus. Its function is as follows. Involved in pre-rRNA processing. The chain is Multiple RNA-binding domain-containing protein 1 (MRD1) from Cryptococcus neoformans var. neoformans serotype D (strain B-3501A) (Filobasidiella neoformans).